The sequence spans 40 residues: Metallothionein-1 (40 aa).

This sequence belongs to the metallothionein superfamily. Type 5 family.

Its function is as follows. This protein binds cations of several transition elements. It is thought to be involved in detoxification processes. In Drosophila ananassae (Fruit fly), this protein is Metallothionein-1 (MtnA).